A 152-amino-acid chain; its full sequence is SsrA-binding protein (152 aa).

Belongs to the SmpB family.

It is found in the cytoplasm. Its function is as follows. Required for rescue of stalled ribosomes mediated by trans-translation. Binds to transfer-messenger RNA (tmRNA), required for stable association of tmRNA with ribosomes. tmRNA and SmpB together mimic tRNA shape, replacing the anticodon stem-loop with SmpB. tmRNA is encoded by the ssrA gene; the 2 termini fold to resemble tRNA(Ala) and it encodes a 'tag peptide', a short internal open reading frame. During trans-translation Ala-aminoacylated tmRNA acts like a tRNA, entering the A-site of stalled ribosomes, displacing the stalled mRNA. The ribosome then switches to translate the ORF on the tmRNA; the nascent peptide is terminated with the 'tag peptide' encoded by the tmRNA and targeted for degradation. The ribosome is freed to recommence translation, which seems to be the essential function of trans-translation. In Helicobacter pylori (strain HPAG1), this protein is SsrA-binding protein.